The sequence spans 293 residues: Glycine--tRNA ligase alpha subunit (293 aa).

Belongs to the class-II aminoacyl-tRNA synthetase family. Tetramer of two alpha and two beta subunits.

The protein resides in the cytoplasm. It carries out the reaction tRNA(Gly) + glycine + ATP = glycyl-tRNA(Gly) + AMP + diphosphate. This chain is Glycine--tRNA ligase alpha subunit, found in Picosynechococcus sp. (strain ATCC 27264 / PCC 7002 / PR-6) (Agmenellum quadruplicatum).